Here is a 209-residue protein sequence, read N- to C-terminus: Probable GTP-binding protein EngB (209 aa).

The 175-residue stretch at 27–201 folds into the EngB-type G domain; it reads SGVEIAFAGR…ATKLDSWFAE (175 aa). GTP contacts are provided by residues 35-42, 62-66, 80-83, 147-150, and 180-182; these read GRSNAGKS, GRTQL, DLPG, TKAD, and YSA. Mg(2+)-binding residues include Ser-42 and Thr-64.

It belongs to the TRAFAC class TrmE-Era-EngA-EngB-Septin-like GTPase superfamily. EngB GTPase family. Mg(2+) is required as a cofactor.

In terms of biological role, necessary for normal cell division and for the maintenance of normal septation. The polypeptide is Probable GTP-binding protein EngB (Glaesserella parasuis serovar 5 (strain SH0165) (Haemophilus parasuis)).